A 132-amino-acid polypeptide reads, in one-letter code: Small ribosomal subunit protein uS8 (132 aa).

It belongs to the universal ribosomal protein uS8 family. In terms of assembly, part of the 30S ribosomal subunit. Contacts proteins S5 and S12.

Its function is as follows. One of the primary rRNA binding proteins, it binds directly to 16S rRNA central domain where it helps coordinate assembly of the platform of the 30S subunit. This chain is Small ribosomal subunit protein uS8, found in Xanthomonas campestris pv. campestris (strain 8004).